Here is a 362-residue protein sequence, read N- to C-terminus: Aspartate-semialdehyde dehydrogenase (362 aa).

Threonine 15, glycine 16, alanine 17, valine 18, serine 40, serine 43, leucine 87, and aspartate 88 together coordinate NADP(+). The Acyl-thioester intermediate role is filled by cysteine 154. Glycine 186 serves as a coordination point for NADP(+). Histidine 251 serves as the catalytic Proton acceptor. Asparagine 340 is a binding site for NADP(+).

The protein belongs to the aspartate-semialdehyde dehydrogenase family. Homotetramer; dimer of dimers.

It is found in the cytoplasm. The protein localises to the cytosol. The protein resides in the nucleus. It catalyses the reaction L-aspartate 4-semialdehyde + phosphate + NADP(+) = 4-phospho-L-aspartate + NADPH + H(+). The protein operates within amino-acid biosynthesis; L-methionine biosynthesis via de novo pathway; L-homoserine from L-aspartate: step 2/3. It participates in amino-acid biosynthesis; L-threonine biosynthesis; L-threonine from L-aspartate: step 2/5. Its function is as follows. Catalyzes the NADPH-dependent formation of L-aspartate 4-semialdehyde (L-ASA) by the reductive dephosphorylation of 4-phospho-L-aspartate. Mediates the second step in the biosynthesis of amino acids that derive from aspartate (the aspartate family of amino acids), including methioinine and threonine, the latter of which is a precursor to isoleucine. The chain is Aspartate-semialdehyde dehydrogenase from Trichophyton rubrum (strain ATCC MYA-4607 / CBS 118892) (Athlete's foot fungus).